A 192-amino-acid chain; its full sequence is dCTP deaminase, dUMP-forming (192 aa).

Residues 101-106, Asp119, 127-129, Gln148, Tyr162, and Gln174 contribute to the dCTP site; these read KSSLGR and TLE. Residue Glu129 is the Proton donor/acceptor of the active site. The tract at residues 171–192 is disordered; that stretch reads YQGQRGPTPSRSWQSWHTWPTR.

It belongs to the dCTP deaminase family. As to quaternary structure, homotrimer.

The catalysed reaction is dCTP + 2 H2O = dUMP + NH4(+) + diphosphate. Its pathway is pyrimidine metabolism; dUMP biosynthesis; dUMP from dCTP: step 1/1. Bifunctional enzyme that catalyzes both the deamination of dCTP to dUTP and the hydrolysis of dUTP to dUMP without releasing the toxic dUTP intermediate. In Salinispora arenicola (strain CNS-205), this protein is dCTP deaminase, dUMP-forming.